A 349-amino-acid polypeptide reads, in one-letter code: Probable dual-specificity RNA methyltransferase RlmN (349 aa).

The active-site Proton acceptor is Glu-94. The region spanning 100–324 is the Radical SAM core domain; it reads YKTHTSICLS…NKNNVNTTIR (225 aa). Cys-107 and Cys-335 are joined by a disulfide. 3 residues coordinate [4Fe-4S] cluster: Cys-114, Cys-118, and Cys-121. Residues 161–162, Ser-193, 216–218, and Asn-292 contribute to the S-adenosyl-L-methionine site; these read GE and SLH. Cys-335 acts as the S-methylcysteine intermediate in catalysis.

It belongs to the radical SAM superfamily. RlmN family. Requires [4Fe-4S] cluster as cofactor.

Its subcellular location is the cytoplasm. It carries out the reaction adenosine(2503) in 23S rRNA + 2 reduced [2Fe-2S]-[ferredoxin] + 2 S-adenosyl-L-methionine = 2-methyladenosine(2503) in 23S rRNA + 5'-deoxyadenosine + L-methionine + 2 oxidized [2Fe-2S]-[ferredoxin] + S-adenosyl-L-homocysteine. It catalyses the reaction adenosine(37) in tRNA + 2 reduced [2Fe-2S]-[ferredoxin] + 2 S-adenosyl-L-methionine = 2-methyladenosine(37) in tRNA + 5'-deoxyadenosine + L-methionine + 2 oxidized [2Fe-2S]-[ferredoxin] + S-adenosyl-L-homocysteine. Functionally, specifically methylates position 2 of adenine 2503 in 23S rRNA and position 2 of adenine 37 in tRNAs. This Finegoldia magna (strain ATCC 29328 / DSM 20472 / WAL 2508) (Peptostreptococcus magnus) protein is Probable dual-specificity RNA methyltransferase RlmN.